A 413-amino-acid chain; its full sequence is S-adenosylmethionine synthase (413 aa).

An ATP-binding site is contributed by His-15. Asp-17 contacts Mg(2+). Glu-43 contacts K(+). 2 residues coordinate L-methionine: Glu-56 and Gln-100. The tract at residues 100–110 (QSPDISQGVNE) is flexible loop. ATP contacts are provided by residues 171 to 173 (DGK), 248 to 249 (KF), Asp-257, 263 to 264 (RK), Ala-280, and Lys-284. Asp-257 contributes to the L-methionine binding site. Lys-288 lines the L-methionine pocket.

Belongs to the AdoMet synthase family. Homotetramer; dimer of dimers. It depends on Mg(2+) as a cofactor. K(+) serves as cofactor.

It localises to the cytoplasm. It catalyses the reaction L-methionine + ATP + H2O = S-adenosyl-L-methionine + phosphate + diphosphate. It functions in the pathway amino-acid biosynthesis; S-adenosyl-L-methionine biosynthesis; S-adenosyl-L-methionine from L-methionine: step 1/1. In terms of biological role, catalyzes the formation of S-adenosylmethionine (AdoMet) from methionine and ATP. The overall synthetic reaction is composed of two sequential steps, AdoMet formation and the subsequent tripolyphosphate hydrolysis which occurs prior to release of AdoMet from the enzyme. The polypeptide is S-adenosylmethionine synthase (Prochlorococcus marinus (strain AS9601)).